A 103-amino-acid chain; its full sequence is uncharacterized protein (103 aa).

The signal sequence occupies residues methionine 1–alanine 13. Asparagine 67 carries an N-linked (GlcNAc...) asparagine glycan. Residues leucine 73 to phenylalanine 103 are disordered.

Its subcellular location is the secreted. This is an uncharacterized protein from Dictyostelium discoideum (Social amoeba).